We begin with the raw amino-acid sequence, 329 residues long: GTP 3',8-cyclase (329 aa).

Residues 1-229 (MNQVDYLRIS…EGYVRGNGPA (229 aa)) form the Radical SAM core domain. R8 lines the GTP pocket. 2 residues coordinate [4Fe-4S] cluster: C15 and C19. Y21 is an S-adenosyl-L-methionine binding site. C22 contributes to the [4Fe-4S] cluster binding site. R60 contacts GTP. S-adenosyl-L-methionine is bound at residue G64. Residue T91 coordinates GTP. S115 serves as a coordination point for S-adenosyl-L-methionine. Position 155 (K155) interacts with GTP. M189 serves as a coordination point for S-adenosyl-L-methionine. 2 residues coordinate [4Fe-4S] cluster: C252 and C255. Residue 257-259 (RVR) coordinates GTP. [4Fe-4S] cluster is bound at residue C269.

It belongs to the radical SAM superfamily. MoaA family. In terms of assembly, monomer and homodimer. [4Fe-4S] cluster is required as a cofactor.

It catalyses the reaction GTP + AH2 + S-adenosyl-L-methionine = (8S)-3',8-cyclo-7,8-dihydroguanosine 5'-triphosphate + 5'-deoxyadenosine + L-methionine + A + H(+). Its pathway is cofactor biosynthesis; molybdopterin biosynthesis. Functionally, catalyzes the cyclization of GTP to (8S)-3',8-cyclo-7,8-dihydroguanosine 5'-triphosphate. This chain is GTP 3',8-cyclase, found in Cyanothece sp. (strain PCC 7425 / ATCC 29141).